A 394-amino-acid chain; its full sequence is L-lactate 2-monooxygenase (394 aa).

The 376-residue stretch at 19–394 folds into the FMN hydroxy acid dehydrogenase domain; it reads VAPTLPMSYA…LTIDALRPTR (376 aa). Tyr-45 contacts a 2-oxocarboxylate. FMN is bound by residues 98–100, Ser-129, and Gln-151; that span reads PIG. Tyr-153 contacts a 2-oxocarboxylate. FMN is bound at residue Thr-179. Arg-188 lines the a 2-oxocarboxylate pocket. Residue Lys-267 coordinates FMN. His-291 acts as the Proton acceptor in catalysis. A 2-oxocarboxylate is bound at residue Arg-294. Residues 321-325 and Arg-345 each bind FMN; that span reads DSGIR.

Belongs to the FMN-dependent alpha-hydroxy acid dehydrogenase family. As to quaternary structure, homotetramer. It depends on FMN as a cofactor.

It carries out the reaction (S)-lactate + O2 = acetate + CO2 + H2O. In terms of biological role, catalyzes the oxidative decarboxylation of (S)-lactate (L-lactate) to acetate and carbon dioxide. Its physiological role remains unknown. The protein is L-lactate 2-monooxygenase of Mycolicibacterium smegmatis (Mycobacterium smegmatis).